The sequence spans 275 residues: Putative replication protein (275 aa).

Positions 98–198 constitute a BRCT domain; sequence SKAICFTPYD…RILKISEDYF (101 aa).

The protein is Putative replication protein of Wigglesworthia glossinidia brevipalpis.